We begin with the raw amino-acid sequence, 143 residues long: Large ribosomal subunit protein uL16 (143 aa).

Over residues 1-17 (MLQPKKTKFRRSQKGRM) the composition is skewed to basic residues. Positions 1 to 25 (MLQPKKTKFRRSQKGRMKGNAQRGN) are disordered.

This sequence belongs to the universal ribosomal protein uL16 family. As to quaternary structure, part of the 50S ribosomal subunit.

Binds 23S rRNA and is also seen to make contacts with the A and possibly P site tRNAs. The sequence is that of Large ribosomal subunit protein uL16 from Azobacteroides pseudotrichonymphae genomovar. CFP2.